We begin with the raw amino-acid sequence, 526 residues long: Reticulocyte-binding protein homolog 5 (526 aa).

Residues 1–24 form the signal peptide; sequence MIRIKKKLILTIIYIHLFILNRLS. Positions 33–51 are mediates interaction with human BSG; the sequence is KNQENNLTLLPIKSTEEEK. N-linked (GlcNAc...) asparagine glycosylation is found at asparagine 38 and asparagine 214. Cystine bridges form between cysteine 224-cysteine 317 and cysteine 345-cysteine 351. Acidic residues predominate over residues 259–279; the sequence is EIDDKSEETDDETEEVEDSIQ. A disordered region spans residues 259–294; it reads EIDDKSEETDDETEEVEDSIQDTDSNHTPSNKKKND. N-linked (GlcNAc...) asparagine glycosylation is present at asparagine 297.

Forms a complex composed of RH5, P113 and human BSG/basigin; the complex bridges the merozoite and host erythrocyte membranes. Within the complex, interacts (via C-terminus) with human BSG/basigin isoform 2 (via the extracellular domain); the interaction is independent of BSG glycosylation status. Weakly interacts with P.troglodytes BSG but not with G.gorilla BSG. Also, interacts (via N-terminus) with P113; the interaction tethers RH5 to the merozoite membrane. Component of the PfRH5 adhesion complex composed of 1 copy of CyRPA, RH5 and RIPR; the complex is formed during merozoite invasion of host erythrocytes specifically at the interface between the parasite and host membranes. Within the complex, interacts with CyRPA. CyRPA recruits RIPR to the RH5-P113-BSG complex; the formation of the PfRH5 adhesion complex increases the affinity of RH5 for BSG and probably leads to the release of RH5 from P113 while maintaining the interaction of the PfRH5 adhesion complex with BSG. Post-translationally, cleaved into a 45kDa form during merozoite invasion of host erythrocyte.

It is found in the secreted. Its subcellular location is the cytoplasmic vesicle. The protein localises to the secretory vesicle. The protein resides in the rhoptry lumen. It localises to the host cell membrane. Its function is as follows. Essential for the invasion of host erythrocytes by blood stage merozoites. By binding P113 at the surface of the merozoite and human BSG/basigin on the erythrocyte membrane, leads to the establishment of a tight junction between the merozoite and host erythrocyte membranes. In addition, the interaction with BSG results in BSG dimerization which triggers an increase in intracellular Ca(2+) in the erythrocyte. This essential step leads to a rearrangement of the erythrocyte cytoskeleton required for the merozoite invasion. The polypeptide is Reticulocyte-binding protein homolog 5 (Plasmodium falciparum (isolate 3D7)).